The primary structure comprises 1070 residues: DNA-directed RNA polymerase subunit beta (1070 aa).

This sequence belongs to the RNA polymerase beta chain family. As to quaternary structure, in plastids the minimal PEP RNA polymerase catalytic core is composed of four subunits: alpha, beta, beta', and beta''. When a (nuclear-encoded) sigma factor is associated with the core the holoenzyme is formed, which can initiate transcription.

Its subcellular location is the plastid. It is found in the chloroplast. The enzyme catalyses RNA(n) + a ribonucleoside 5'-triphosphate = RNA(n+1) + diphosphate. Functionally, DNA-dependent RNA polymerase catalyzes the transcription of DNA into RNA using the four ribonucleoside triphosphates as substrates. In Silene latifolia (White campion), this protein is DNA-directed RNA polymerase subunit beta.